The sequence spans 194 residues: Small ribosomal subunit protein uS4c (194 aa).

Residues 82–143 (MRLDNILFRL…KQRSKALIQN (62 aa)) form the S4 RNA-binding domain.

Belongs to the universal ribosomal protein uS4 family. Part of the 30S ribosomal subunit. Contacts protein S5. The interaction surface between S4 and S5 is involved in control of translational fidelity.

It localises to the plastid. Its subcellular location is the chloroplast. Its function is as follows. One of the primary rRNA binding proteins, it binds directly to 16S rRNA where it nucleates assembly of the body of the 30S subunit. Functionally, with S5 and S12 plays an important role in translational accuracy. The polypeptide is Small ribosomal subunit protein uS4c (rps4) (Sisyrinchium striatum (Satin flower)).